Here is a 433-residue protein sequence, read N- to C-terminus: uncharacterized protein (433 aa).

A coiled-coil region spans residues 258 to 304 (KNIKSKLLLELRQLKNNITNLQNKITKTMDNVKKIIEEIEQSKNKVT).

Belongs to the mimivirus R160 family.

It localises to the virion. This is an uncharacterized protein from Acanthamoeba polyphaga mimivirus (APMV).